We begin with the raw amino-acid sequence, 799 residues long: Signal transducer and activator of transcription 5A (799 aa).

Y90 bears the Phosphotyrosine mark. Residue S128 is modified to Phosphoserine. The region spanning 589-686 (WNDGAILGFV…EVFSKYYTPV (98 aa)) is the SH2 domain. Phosphotyrosine is present on Y682. Y699 carries the phosphotyrosine; by JAK2 modification. Positions 778–799 (DSLDPRLSPPAGLFASTRGSLS) are disordered. At S785 the chain carries Phosphoserine.

The protein belongs to the transcription factor STAT family. Forms a homodimer or a heterodimer with a related family member. Binds NR3C1. Interacts with NCOA1 and SOCS7. Interacts with ERBB4. Interacts with EBF4. Interacts with CD69. Post-translationally, ISGylated. Tyrosine phosphorylated in response to KITLG/SCF, IL2, IL3, IL7, IL15, CSF2/GMCSF, GH1, PRL, EPO and THPO. Activated KIT promotes phosphorylation on tyrosine residues and subsequent translocation to the nucleus. Tyrosine phosphorylated in response to constitutively activated FGFR1, FGFR2, FGFR3 and FGFR4. Tyrosine phosphorylation is required for DNA-binding activity and dimerization. Serine phosphorylation is also required for maximal transcriptional activity. Tyrosine phosphorylated in response to signaling via activated FLT3; wild-type FLT3 results in much weaker phosphorylation than constitutively activated mutant FLT3. Alternatively, can be phosphorylated by JAK2 at Tyr-699.

It localises to the cytoplasm. The protein resides in the nucleus. Its function is as follows. Carries out a dual function: signal transduction and activation of transcription. Mediates cellular responses to the cytokine KITLG/SCF and other growth factors. May mediate cellular responses to activated FGFR1, FGFR2, FGFR3 and FGFR4. Binds to the GAS element and activates PRL-induced transcription. Regulates the expression of milk proteins during lactation. This is Signal transducer and activator of transcription 5A (STAT5A) from Sus scrofa (Pig).